A 363-amino-acid chain; its full sequence is UDP-N-acetylglucosamine--N-acetylmuramyl-(pentapeptide) pyrophosphoryl-undecaprenol N-acetylglucosamine transferase (363 aa).

Residues 10-12 (TGG), N124, S195, I250, and Q295 contribute to the UDP-N-acetyl-alpha-D-glucosamine site.

The protein belongs to the glycosyltransferase 28 family. MurG subfamily.

The protein resides in the cell membrane. It catalyses the reaction di-trans,octa-cis-undecaprenyl diphospho-N-acetyl-alpha-D-muramoyl-L-alanyl-D-glutamyl-meso-2,6-diaminopimeloyl-D-alanyl-D-alanine + UDP-N-acetyl-alpha-D-glucosamine = di-trans,octa-cis-undecaprenyl diphospho-[N-acetyl-alpha-D-glucosaminyl-(1-&gt;4)]-N-acetyl-alpha-D-muramoyl-L-alanyl-D-glutamyl-meso-2,6-diaminopimeloyl-D-alanyl-D-alanine + UDP + H(+). It functions in the pathway cell wall biogenesis; peptidoglycan biosynthesis. Its function is as follows. Cell wall formation. Catalyzes the transfer of a GlcNAc subunit on undecaprenyl-pyrophosphoryl-MurNAc-pentapeptide (lipid intermediate I) to form undecaprenyl-pyrophosphoryl-MurNAc-(pentapeptide)GlcNAc (lipid intermediate II). The sequence is that of UDP-N-acetylglucosamine--N-acetylmuramyl-(pentapeptide) pyrophosphoryl-undecaprenol N-acetylglucosamine transferase from Listeria monocytogenes serotype 4b (strain CLIP80459).